Here is an 89-residue protein sequence, read N- to C-terminus: Serine-rich and transmembrane domain-containing 2 (89 aa).

Residue Asn-11 is glycosylated (N-linked (GlcNAc...) asparagine). Residues 38–58 (YVGLFLSLLAILLILLFTMLL) traverse the membrane as a helical segment.

The protein localises to the membrane. The polypeptide is Serine-rich and transmembrane domain-containing 2 (Mus musculus (Mouse)).